A 272-amino-acid polypeptide reads, in one-letter code: Sulfur carrier protein FdhD (272 aa).

Residue Cys-114 is the Cysteine persulfide intermediate of the active site.

Belongs to the FdhD family.

It is found in the cytoplasm. Required for formate dehydrogenase (FDH) activity. Acts as a sulfur carrier protein that transfers sulfur from IscS to the molybdenum cofactor prior to its insertion into FDH. This Mycolicibacterium paratuberculosis (strain ATCC BAA-968 / K-10) (Mycobacterium paratuberculosis) protein is Sulfur carrier protein FdhD.